A 107-amino-acid chain; its full sequence is MRQCTPSLPLCSWTSQKSISLTVLDSIIQISPLVLSNRRLDYKTSVSANLARTSPGLLTTSVLESTFQQEITSFHQEFKNQTTNSACSVKTGAKTSTCIYLYTHNSM.

This is an uncharacterized protein from Saccharomyces cerevisiae (strain ATCC 204508 / S288c) (Baker's yeast).